We begin with the raw amino-acid sequence, 199 residues long: BREX protein BrxA (199 aa).

It belongs to the BrxA family.

BREX systems (bacteriophage exclusion) provide immunity against bacteriophage. Part of a type 1 BREX system which protects against dsDNA phage. This system allows phage adsorption but prevents phage DNA replication, without degradation of the phage DNA. Methylation of bacterial DNA by PglX guides self/non-self discrimination. This Paramagnetospirillum magneticum (strain ATCC 700264 / AMB-1) (Magnetospirillum magneticum) protein is BREX protein BrxA.